The chain runs to 1025 residues: Multidrug resistance protein MdtC (1025 aa).

12 consecutive transmembrane segments (helical) span residues 3–23, 333–353, 360–380, 387–407, 431–451, 463–483, 528–548, 853–873, 875–895, 897–917, 953–973, and 984–1004; these read FFAL…AITL, EVEQ…FLFL, IIPA…MYLC, LSLM…IVVL, VGFT…PLLL, FAVT…TLTP, LVGV…ISIP, VILI…LYES, VHPL…LLAL, LFNA…IGIV, PIMM…LSGG, and ITIV…TPVV.

The protein belongs to the resistance-nodulation-cell division (RND) (TC 2.A.6) family. MdtC subfamily. In terms of assembly, part of a tripartite efflux system composed of MdtA, MdtB and MdtC. MdtC forms a heteromultimer with MdtB.

The protein resides in the cell inner membrane. This is Multidrug resistance protein MdtC from Shigella boydii serotype 4 (strain Sb227).